A 352-amino-acid polypeptide reads, in one-letter code: Popeye domain-containing protein 1 (352 aa).

Over 1–38 (MSNTTSALPSSVPAVSLDPNATLCQDWEQSHHLLFHLA) the chain is Extracellular. 2 N-linked (GlcNAc...) asparagine glycosylation sites follow: asparagine 3 and asparagine 20. The helical transmembrane segment at 39 to 59 (NLSLGLGFLIPTTLALHMIFL) threads the bilayer. A topological domain (cytoplasmic) is located at residue arginine 60. A helical membrane pass occupies residues 61–81 (LLLMTGCSLFIAWATLYRCTL). Aspartate 82 is a topological domain (extracellular). A helical membrane pass occupies residues 83–103 (VMVWNVVFLLVNFMHFFFLLY). Over 104–352 (KRRPIKIDRE…NVSKTTKKDI (249 aa)) the chain is Cytoplasmic. The interval 299-352 (ILRGGSTGSSLQKNPLTKTSTTMKPIEEGLEDDVFESESPTTSQNVSKTTKKDI) is disordered. Polar residues-rich tracts occupy residues 306–321 (GSSL…STTM) and 336–346 (ESPTTSQNVSK).

The protein belongs to the popeye family. As to expression, expressed in skeletal muscle (at protein level).

It is found in the lateral cell membrane. It localises to the cell junction. The protein localises to the tight junction. The protein resides in the membrane. Its subcellular location is the cell membrane. It is found in the sarcolemma. It localises to the caveola. Cell adhesion molecule involved in the establishment and/or maintenance of cell integrity. Involved in skeletal muscle and heart development as well as in the maintenance of heart function. May play a role in vamp3-mediated vesicular transport and recycling of receptor molecules. Involved in the formation and regulation of the tight junction (TJ) paracellular permeability barrier in epithelial cells. May induce primordial adhesive contact and aggregation of epithelial cells in a Ca(2+)-independent manner. May be involved in epithelial movement during corneal sheet formation and regeneration. May play a role in the regulation of cell shape and movement by modulating the Rho-GTPase activity. May also be involved in striated muscle regeneration and in the regulation of cell spreading. This Danio rerio (Zebrafish) protein is Popeye domain-containing protein 1 (popdc1).